The primary structure comprises 239 residues: Calcium-activated potassium channel subunit beta-3 (239 aa).

The Cytoplasmic segment spans residues 1–51; it reads MQPFSIPVQITLQGGRRRQGRTALPASGISNGDPLKVHPKLPSSAGEDRAT. A disordered region spans residues 15–38; the sequence is GRRRQGRTALPASGISNGDPLKVH. Residues 52–72 form a helical membrane-spanning segment; it reads LLGIAMMASSVLMFFLLGTTV. Over 73–197 the chain is Extracellular; that stretch reads LKPFMLSSPR…GVVLRKSGHK (125 aa). N-linked (GlcNAc...) asparagine glycans are attached at residues Asn86, Asn123, and Asn174. A helical transmembrane segment spans residues 198-218; that stretch reads VVFHCLFWPLLTLLGGALIVG. Topologically, residues 219–239 are cytoplasmic; it reads LVRLTQHLSFQCEKYRAVVRA.

Belongs to the KCNMB (TC 8.A.14.1) family. KCNMB3 subfamily. As to quaternary structure, interacts with KCNMA1 tetramer. There are probably 4 molecules of KCMNB3 per KCNMA1 tetramer. N-glycosylated. Post-translationally, the extracellular domain contains disulfide bond essential for the gating mechanism.

It is found in the membrane. Regulatory subunit of the calcium activated potassium KCNMA1 (maxiK) channel. Modulates the calcium sensitivity and gating kinetics of KCNMA1, thereby contributing to KCNMA1 channel diversity. Alters the functional properties of the current expressed by the KCNMA1 channel. May partially inactivate the current of KCNBMA. Two or more subunits of KCNMB3 are required to block the KCNMA1 tetramer. This Rattus norvegicus (Rat) protein is Calcium-activated potassium channel subunit beta-3.